Consider the following 135-residue polypeptide: L-ectoine synthase (135 aa).

It belongs to the ectoine synthase family.

The catalysed reaction is (2S)-4-acetamido-2-aminobutanoate = L-ectoine + H2O. It participates in amine and polyamine biosynthesis; ectoine biosynthesis; L-ectoine from L-aspartate 4-semialdehyde: step 3/3. Catalyzes the circularization of gamma-N-acetyl-alpha,gamma-diaminobutyric acid (ADABA) to ectoine (1,4,5,6-tetrahydro-2-methyl-4-pyrimidine carboxylic acid), which is an excellent osmoprotectant. The protein is L-ectoine synthase of Saccharopolyspora erythraea (strain ATCC 11635 / DSM 40517 / JCM 4748 / NBRC 13426 / NCIMB 8594 / NRRL 2338).